Reading from the N-terminus, the 198-residue chain is Probable GTP-binding protein EngB (198 aa).

Positions 22–195 constitute an EngB-type G domain; that stretch reads GHPEIAFLGR…WSWLEQTAGL (174 aa). GTP contacts are provided by residues 30–37, 57–61, 75–78, 142–145, and 174–176; these read GRSNVGKS, GKTQT, DVPG, TKID, and FSA. Mg(2+)-binding residues include Ser37 and Thr59.

This sequence belongs to the TRAFAC class TrmE-Era-EngA-EngB-Septin-like GTPase superfamily. EngB GTPase family. Mg(2+) serves as cofactor.

In terms of biological role, necessary for normal cell division and for the maintenance of normal septation. The protein is Probable GTP-binding protein EngB of Lacticaseibacillus paracasei (strain ATCC 334 / BCRC 17002 / CCUG 31169 / CIP 107868 / KCTC 3260 / NRRL B-441) (Lactobacillus paracasei).